The chain runs to 501 residues: Sodium-coupled neutral amino acid symporter 2 (501 aa).

Positions 1–26 (MSSAEMGKFDISPDEDSSSYSSNSND) are disordered. At 1 to 77 (MSSAEMGKFD…HPGTTSFGMS (77 aa)) the chain is on the cytoplasmic side. Positions 1–97 (MSSAEMGKFD…SGILGLSYAM (97 aa)) are regulates protein turnover upon amino acid deprivation. A helical membrane pass occupies residues 78–97 (VFNLSNAIVGSGILGLSYAM). N83 contributes to the Na(+) binding site. Topologically, residues 98-103 (ANTGIA) are extracellular. Residues 104–124 (LFVILLLVVSILSLYSVHLLL) traverse the membrane as a helical segment. The Cytoplasmic portion of the chain corresponds to 125 to 159 (KTANEGGSLLYEQLGMKAFGMPGKLAASGSITMQN). The helical transmembrane segment at 160–178 (IGAMSSYLFIVKYELPLVI) threads the bilayer. At 179 to 189 (KTFMNIEENAG) the chain is on the extracellular side. A helical transmembrane segment spans residues 190-210 (HWYLNGDYLVLLVSVILILPL). Over 211–218 (SLLKNLGY) the chain is Cytoplasmic. A helical membrane pass occupies residues 219–239 (LGYTSGFSLLCMVFFLIVVIW). Topologically, residues 240–287 (KMFQIPCPMESDIINATLINATLAPFADENITISDACKPEYFIFNSQT) are extracellular. A disulfide bridge links C246 with C276. N-linked (GlcNAc...) asparagine glycans are attached at residues N254 and N259. A helical membrane pass occupies residues 288–308 (VYAVPILTFSFVCHPAILPIY). The Cytoplasmic segment spans residues 309–324 (EELKSRSRKRMMNVSY). A helical transmembrane segment spans residues 325–345 (VSFFAMFLMYLLAALFGYLTF). The Extracellular segment spans residues 346 to 366 (YGRVESELLHTYSAFLGADIL). The chain crosses the membrane as a helical span at residues 367-387 (LLIVRLAVLMAVTLTVPVVIF). Na(+) is bound at residue T381. Over 388–408 (PIRSSVTQLLWAGKEFSWWRH) the chain is Cytoplasmic. The chain crosses the membrane as a helical span at residues 409-429 (CSITVVLLAFTNVLVIFVPTI). Residues 430 to 431 (RD) lie on the Extracellular side of the membrane. A helical transmembrane segment spans residues 432-452 (IFGFIGASAAAMLIFILPSAF). Residues 453-467 (YIKLVKKEPMKSVQK) lie on the Cytoplasmic side of the membrane. The chain crosses the membrane as a helical span at residues 468 to 490 (IGAALFFLSGILVMTGCMTLIIL). At 491–501 (DWIHTDASDGH) the chain is on the extracellular side.

The protein belongs to the amino acid/polyamine transporter 2 family.

It is found in the cell membrane. The catalysed reaction is L-alanine(in) + Na(+)(in) = L-alanine(out) + Na(+)(out). The enzyme catalyses glycine(in) + Na(+)(in) = glycine(out) + Na(+)(out). It carries out the reaction L-serine(in) + Na(+)(in) = L-serine(out) + Na(+)(out). It catalyses the reaction L-proline(in) + Na(+)(in) = L-proline(out) + Na(+)(out). The catalysed reaction is L-methionine(in) + Na(+)(in) = L-methionine(out) + Na(+)(out). The enzyme catalyses L-histidine(in) + Na(+)(in) = L-histidine(out) + Na(+)(out). It carries out the reaction L-asparagine(in) + Na(+)(in) = L-asparagine(out) + Na(+)(out). It catalyses the reaction L-glutamine(in) + Na(+)(in) = L-glutamine(out) + Na(+)(out). The catalysed reaction is L-threonine(in) + Na(+)(in) = L-threonine(out) + Na(+)(out). The enzyme catalyses L-leucine(in) + Na(+)(in) = L-leucine(out) + Na(+)(out). It carries out the reaction L-phenylalanine(in) + Na(+)(in) = L-phenylalanine(out) + Na(+)(out). Inhibited by N-methyl-D-glucamine. Inhibited by choline. Allosteric regulation of sodium ions binding by pH. In terms of biological role, symporter that cotransports neutral amino acids and sodium ions from the extracellular to the intracellular side of the cell membrane. The transport is pH-sensitive, Li(+)-intolerant, electrogenic, driven by the Na(+) electrochemical gradient and cotransports of neutral amino acids and sodium ions with a stoichiometry of 1:1. This chain is Sodium-coupled neutral amino acid symporter 2, found in Gallus gallus (Chicken).